A 352-amino-acid chain; its full sequence is Peptide chain release factor 1 (352 aa).

An N5-methylglutamine modification is found at Q233. The disordered stretch occupies residues 288–309 (NAKDRKEQVGSGDRSERIRTYN). Residues 289–306 (AKDRKEQVGSGDRSERIR) show a composition bias toward basic and acidic residues.

This sequence belongs to the prokaryotic/mitochondrial release factor family. In terms of processing, methylated by PrmC. Methylation increases the termination efficiency of RF1.

It localises to the cytoplasm. Functionally, peptide chain release factor 1 directs the termination of translation in response to the peptide chain termination codons UAG and UAA. In Helicobacter acinonychis (strain Sheeba), this protein is Peptide chain release factor 1.